Here is a 95-residue protein sequence, read N- to C-terminus: Integration host factor subunit beta (95 aa).

A disordered region spans residues arginine 56–tyrosine 76.

This sequence belongs to the bacterial histone-like protein family. Heterodimer of an alpha and a beta chain.

Functionally, this protein is one of the two subunits of integration host factor, a specific DNA-binding protein that functions in genetic recombination as well as in transcriptional and translational control. The chain is Integration host factor subunit beta from Shewanella woodyi (strain ATCC 51908 / MS32).